Here is a 589-residue protein sequence, read N- to C-terminus: MLPRMLKMKTVGTVLAVIWLFGLAFIYVQSTSSSLRPPGRHPPPLPQLDPLIPQNPPQNDEIRPKKSAPPIPTINLAEDTTIHERTEKDVTWKTFDVEKFLNKGKWHQGEDKYKANSFNQEASDALNPTRKIPDSREPQCRDVDYSKVGMQPTTVIITYHNEARSSLLRTVFSVFNQSPEELLLEIVLVDDNSQDVEIGKELAQIQRITVLRNNQREGLIRSRVKGAQVARAPVLTFLDSHIECNQKWLEPLLARIAENPKAVVAPIIDVINVDNFNYVGASADLRGGFDWTLVFRWEFMNEQLRKERHAHPTAPIRSPTMAGGLFAISKEWFNELGTYDLDMEVWGGENLEMSFRVWQCGGSLEIMPCSRVGHVFRKKHPYTFPGGSGNVFQKNTRRAAEVWMDEYKAIYLKNVPSARFVNFGDITDRLAIRDRLQCKSFKWYLENVYPQLEIPRKTPGKSFQMKIGNLCLDSMARKESEAPGLFGCHGTGGNQEWVFDQLTKTFKNAISQLCLDFSSNTENKTVTMVKCENLRPDTMVVEKNGWLTQGGKCLTVNQGSGGDWLIYGAHCELNNGAQRWIFEKLDTYE.

Residues 1-11 (MLPRMLKMKTV) are Cytoplasmic-facing. A helical; Signal-anchor for type II membrane protein transmembrane segment spans residues 12 to 31 (GTVLAVIWLFGLAFIYVQST). The Lumenal segment spans residues 32-589 (SSSLRPPGRH…WIFEKLDTYE (558 aa)). The interval 33 to 73 (SSLRPPGRHPPPLPQLDPLIPQNPPQNDEIRPKKSAPPIPT) is disordered. Cystine bridges form between C140–C369, C360–C438, C471–C488, C514–C531, and C553–C571. Residues 150 to 255 (MQPTTVIITY…QKWLEPLLAR (106 aa)) are catalytic subdomain A. Residues D191 and R216 each contribute to the substrate site. D239 is a Mn(2+) binding site. A substrate-binding site is contributed by S240. H241 is a Mn(2+) binding site. Positions 315-377 (PIRSPTMAGG…PCSRVGHVFR (63 aa)) are catalytic subdomain B. Residue W346 participates in substrate binding. A Mn(2+)-binding site is contributed by H374. R377, H380, and Y382 together coordinate substrate. Positions 458 to 589 (TPGKSFQMKI…WIFEKLDTYE (132 aa)) constitute a Ricin B-type lectin domain. N523 is a glycosylation site (N-linked (GlcNAc...) asparagine).

The protein belongs to the glycosyltransferase 2 family. GalNAc-T subfamily. It depends on Mn(2+) as a cofactor.

The protein localises to the golgi apparatus membrane. The catalysed reaction is L-seryl-[protein] + UDP-N-acetyl-alpha-D-galactosamine = a 3-O-[N-acetyl-alpha-D-galactosaminyl]-L-seryl-[protein] + UDP + H(+). It carries out the reaction L-threonyl-[protein] + UDP-N-acetyl-alpha-D-galactosamine = a 3-O-[N-acetyl-alpha-D-galactosaminyl]-L-threonyl-[protein] + UDP + H(+). Its pathway is protein modification; protein glycosylation. Functionally, catalyzes the initial reaction in O-linked oligosaccharide biosynthesis, the transfer of an N-acetyl-D-galactosamine residue to a serine or threonine residue on the protein receptor. The sequence is that of Polypeptide N-acetylgalactosaminyltransferase 4 (gly-4) from Caenorhabditis elegans.